We begin with the raw amino-acid sequence, 100 residues long: Small ribosomal subunit protein uS14c (100 aa).

Belongs to the universal ribosomal protein uS14 family. In terms of assembly, part of the 30S ribosomal subunit.

The protein localises to the plastid. The protein resides in the chloroplast. Its function is as follows. Binds 16S rRNA, required for the assembly of 30S particles. The sequence is that of Small ribosomal subunit protein uS14c from Barbarea verna (Land cress).